A 210-amino-acid chain; its full sequence is T-cell surface glycoprotein CD8 beta-2 chain (210 aa).

The N-terminal stretch at 1 to 18 (MRPRLWLLLAAQLTVLHG) is a signal peptide. One can recognise an Ig-like V-type domain in the interval 19 to 132 (NSVLQQTPAY…ELTFGKGTQL (114 aa)). The Extracellular portion of the chain corresponds to 19 to 170 (NSVLQQTPAY…ETQKGPLCSP (152 aa)). Cys-41 and Cys-116 are joined by a disulfide. Asn-102 carries N-linked (GlcNAc...) asparagine glycosylation. Residues 171–191 (VTLGLLVAGVLVLLVSLGVAM) form a helical membrane-spanning segment. At 192-210 (HLCCRRRRARLRFMKQFYK) the chain is on the cytoplasmic side.

As to quaternary structure, in general heterodimer of an alpha and a beta chain linked by two disulfide bonds.

It is found in the cell membrane. Identifies cytotoxic/suppressor T-cells that interact with MHC class I bearing targets. CD8 is thought to play a role in the process of T-cell mediated killing. The polypeptide is T-cell surface glycoprotein CD8 beta-2 chain (Homo sapiens (Human)).